We begin with the raw amino-acid sequence, 114 residues long: Large ribosomal subunit protein bL19 (114 aa).

The protein belongs to the bacterial ribosomal protein bL19 family.

This protein is located at the 30S-50S ribosomal subunit interface and may play a role in the structure and function of the aminoacyl-tRNA binding site. This chain is Large ribosomal subunit protein bL19 (rplS), found in Listeria monocytogenes serovar 1/2a (strain ATCC BAA-679 / EGD-e).